The primary structure comprises 377 residues: Early estrogen-induced gene 1 protein (377 aa).

Positions 2 to 145 constitute a C2 NT-type domain; it reads AFLTKKKKFK…ILKVNIGMSL (144 aa). Polar residues-rich tracts occupy residues 160-173, 188-198, and 222-234; these read KTVS…SLQM, VRQNRSRQAML, and SRNS…QSKI. Positions 160 to 313 are disordered; it reads KTVSPPGQDS…SVESQPTWVD (154 aa). Residues 256-269 are compositionally biased toward low complexity; that stretch reads TSTSSSVSGGLSLT. Positions 274–285 are enriched in basic and acidic residues; sequence EPERDVKPEKPP.

This sequence belongs to the EEIG family.

The protein resides in the nucleus. It localises to the cytoplasm. In terms of biological role, may be involved in osteoclast differentiation. The protein is Early estrogen-induced gene 1 protein (eeig1) of Xenopus laevis (African clawed frog).